The sequence spans 140 residues: DegV domain-containing 15.5 kDa protein (140 aa).

Residues 4–140 (QIIVTDSTSD…ELVLLQSKKI (137 aa)) enclose the DegV domain. Residues T61 and S93 each coordinate hexadecanoate.

Its function is as follows. May bind long-chain fatty acids, such as palmitate, and may play a role in lipid transport or fatty acid metabolism. This is DegV domain-containing 15.5 kDa protein from Staphylococcus aureus.